The sequence spans 647 residues: Transcriptional repressor XBP1 (647 aa).

Polar residues-rich tracts occupy residues 138–148 and 156–170; these read SNKTPVSASPT and STAS…LTKN. Disordered stretches follow at residues 138 to 170 and 264 to 295; these read SNKT…LTKN and LLSS…STSS. A compositionally biased stretch (low complexity) spans 264–282; that stretch reads LLSSSTSSPPKRRTSTGST. In terms of domain architecture, HTH APSES-type spans 282-395; it reads TFLDANASSS…PDFPKDCESW (114 aa). Residues 318 to 339 constitute a DNA-binding region (H-T-H motif); it reads CQSYKDFLINELGPDQIDLPNL. Over residues 425-434 the composition is skewed to low complexity; sequence TNFTSTAVAR. Disordered stretches follow at residues 425-455, 485-508, and 612-647; these read TNFT…HSKA, KKNS…GPRD, and QNQR…NSKQ. Over residues 435 to 445 the composition is skewed to basic residues; it reads PRQKPRPRPRQ. Residues 493-502 show a composition bias toward low complexity; that stretch reads SSTYTSQTSS.

It localises to the nucleus. Transcriptional repressor which binds to the consensus sequence 5'-GCCTCGA[G/A]G[C/A]-3'. Represses CLN1 transcription. This is Transcriptional repressor XBP1 (XBP1) from Saccharomyces cerevisiae (strain ATCC 204508 / S288c) (Baker's yeast).